Reading from the N-terminus, the 346-residue chain is UDP-N-acetylenolpyruvoylglucosamine reductase (346 aa).

In terms of domain architecture, FAD-binding PCMH-type spans 23–194 (FDVRAQFACR…TSVTFRLPKV (172 aa)). The active site involves Arg170. The active-site Proton donor is Ser246. The active site involves Glu342.

The protein belongs to the MurB family. It depends on FAD as a cofactor.

It localises to the cytoplasm. It carries out the reaction UDP-N-acetyl-alpha-D-muramate + NADP(+) = UDP-N-acetyl-3-O-(1-carboxyvinyl)-alpha-D-glucosamine + NADPH + H(+). The protein operates within cell wall biogenesis; peptidoglycan biosynthesis. Cell wall formation. The protein is UDP-N-acetylenolpyruvoylglucosamine reductase of Paraburkholderia phytofirmans (strain DSM 17436 / LMG 22146 / PsJN) (Burkholderia phytofirmans).